Reading from the N-terminus, the 287-residue chain is F420-non-reducing hydrogenase vhu subunit G (287 aa).

It belongs to the [NiFe]/[NiFeSe] hydrogenase small subunit family. The F420-non-reducing hydrogenase vhu is composed of four subunits; VhuA, VhuD, VhuG and VhuU.

The chain is F420-non-reducing hydrogenase vhu subunit G (vhuG) from Methanococcus voltae.